Reading from the N-terminus, the 369-residue chain is S-(hydroxymethyl)glutathione dehydrogenase (369 aa).

C40, H62, C92, C95, C98, C106, and C169 together coordinate Zn(2+).

Belongs to the zinc-containing alcohol dehydrogenase family. Class-III subfamily. Homodimer. Zn(2+) is required as a cofactor.

It localises to the cytoplasm. It catalyses the reaction S-(hydroxymethyl)glutathione + NADP(+) = S-formylglutathione + NADPH + H(+). The catalysed reaction is S-(hydroxymethyl)glutathione + NAD(+) = S-formylglutathione + NADH + H(+). The enzyme catalyses a primary alcohol + NAD(+) = an aldehyde + NADH + H(+). It carries out the reaction a secondary alcohol + NAD(+) = a ketone + NADH + H(+). It catalyses the reaction S-nitrosoglutathione + NADH + H(+) = S-(hydroxysulfenamide)glutathione + NAD(+). Has high formaldehyde dehydrogenase activity in the presence of glutathione and catalyzes the oxidation of normal alcohols in a reaction that is not GSH-dependent. In addition, hemithiolacetals other than those formed from GSH, including omega-thiol fatty acids, also are substrates. Also acts as a S-nitroso-glutathione reductase by catalyzing the NADH-dependent reduction of S-nitrosoglutathione. This is S-(hydroxymethyl)glutathione dehydrogenase (frmA) from Escherichia coli (strain SMS-3-5 / SECEC).